A 218-amino-acid chain; its full sequence is Cytidylate kinase (218 aa).

11–19 (GPSGVGKST) is a binding site for ATP.

The protein belongs to the cytidylate kinase family. Type 1 subfamily.

It localises to the cytoplasm. It carries out the reaction CMP + ATP = CDP + ADP. It catalyses the reaction dCMP + ATP = dCDP + ADP. This chain is Cytidylate kinase, found in Mycoplasmopsis synoviae (strain 53) (Mycoplasma synoviae).